Here is a 301-residue protein sequence, read N- to C-terminus: Homoserine O-acetyltransferase (301 aa).

Catalysis depends on Cys-142, which acts as the Acyl-thioester intermediate. The substrate site is built by Lys-163 and Ser-192. Catalysis depends on His-235, which acts as the Proton acceptor. Residue Glu-237 is part of the active site. Position 249 (Arg-249) interacts with substrate.

It belongs to the MetA family.

It is found in the cytoplasm. The catalysed reaction is L-homoserine + acetyl-CoA = O-acetyl-L-homoserine + CoA. The protein operates within amino-acid biosynthesis; L-methionine biosynthesis via de novo pathway; O-acetyl-L-homoserine from L-homoserine: step 1/1. Functionally, transfers an acetyl group from acetyl-CoA to L-homoserine, forming acetyl-L-homoserine. The sequence is that of Homoserine O-acetyltransferase from Bacillus cereus (strain AH187).